The primary structure comprises 293 residues: Zinc finger protein 80 (293 aa).

C2H2-type zinc fingers lie at residues 69–91 (YKCKECGKVFNKNSLLVRHHQIH) and 97–119 (YECQECGKAFHEKVDFVRHMRIH). The C2H2-type 3; atypical zinc-finger motif lies at 125-147 (CKCVECGKVFNRRSHLLCYHQIH). 4 consecutive C2H2-type zinc fingers follow at residues 153–175 (YECSECGKTFSYHSVFIQHRMTH), 181–203 (FGCKECGKTFYYNSSLTRHMKIH), 209–231 (YKCGECGKTFTYHSVFFRHSMTH), and 237–259 (YECKECGKGFYYSYSLTRHTRSH).

Belongs to the krueppel C2H2-type zinc-finger protein family.

The protein resides in the nucleus. May be involved in transcriptional regulation. The sequence is that of Zinc finger protein 80 (ZNF80) from Macaca mulatta (Rhesus macaque).